The primary structure comprises 303 residues: Short chain dehydrogenase pigC (303 aa).

Residues isoleucine 45, aspartate 103, asparagine 130, arginine 164, tyrosine 196, lysine 200, and threonine 231 each contribute to the NADP(+) site. Residue tyrosine 196 is the Proton donor of the active site. The Lowers pKa of active site Tyr role is filled by lysine 200.

This sequence belongs to the short-chain dehydrogenases/reductases (SDR) family.

It participates in secondary metabolite biosynthesis. Its function is as follows. Short chain dehydrogenase; part of the gene cluster that mediates the biosynthesis of azaphilone pigments (MonAzPs), a complex mixture of compounds with a common azaphilone skeleton very widely used as food colorants. Within the pathway, pigC intercepts the very reactive benzaldehyde produced by the nrPKS pigA to reduce the omega-1 carbonyl to the alcohol to provide the first stable enzyme-free MonAzPs intermediate, 6-(4-hydroxy-2-oxopentyl)-3-methyl-2,4-dioxocyclohexane carbaldehyde, also known as M7PKS-1. The first step of the pathway is performed by the nrPKS pigA that forms the hexaketide precursor from successive condensations of five malonyl-CoA units, with a simple acetyl-CoA starter unit. The role of esterase pigG is not clear, but it may play at most a supplementary role in the formation of the benzaldehyde produced by the pigA nrPKS. This very reactive benzaldehyde is intercepted by the pigC ketoreductase that to provide the first stable enzyme-free MonAzPs intermediate, M7PKS-1. The FAD-dependent monooxygenase pigN hydroxylates M7PKS-1 at C-4, which triggers the formation of the pyran ring. PigJ, pigK and pigD are involved in the acetylation of the pyran ring. PigJ and pigK form the two subunits of a dedicated fungal FAS that produces the side chain fatty acyl moiety of MonAzPs and pigD transfers the fatty acyl chain to the C-4 alcohol. PigM and pigO are involved in the elimination of the omega-1 alcohol. PigM acts as an O-acetyltransferase that synthesizes the putative O-11 acetyl intermediate whereas pigO eliminates acetic acid to yield an intermediate with a C10(11) double bond. The dehydration of the C-11 alcohol followed by the reduction of the C6(7) double bond by the NAD(P)H-dependent oxidoreductase pigE increases the electrophilicity of the C-5 ketone of the resulting acyl benzopyran. This in turn sets up the C-5 ketone for an intramolecular Knoevenagel aldol condensation with the C-20 enol of the side chain. This condensation affords the characteristic linear tricyclic carbon skeletons of the yellow pigments that serve as the common precursors for the classical yellow pigments monascin and ankaflavin, orange pigments rubopunctatin and monascorubrin, and red pigments ribropunctamine and monascorubramine. The FAD-dependent oxidoreductase pigF is especially invoved in the biosynthesis of orange and red pigments via desaturation of C6(7). This is Short chain dehydrogenase pigC from Monascus ruber (Mold).